We begin with the raw amino-acid sequence, 274 residues long: tRNA-cytidine(32) 2-sulfurtransferase (274 aa).

The PP-loop motif motif lies at 40 to 45 (SGGKDS). [4Fe-4S] cluster is bound by residues C115, C118, and C206.

This sequence belongs to the TtcA family. Homodimer. It depends on Mg(2+) as a cofactor. The cofactor is [4Fe-4S] cluster.

The protein resides in the cytoplasm. It catalyses the reaction cytidine(32) in tRNA + S-sulfanyl-L-cysteinyl-[cysteine desulfurase] + AH2 + ATP = 2-thiocytidine(32) in tRNA + L-cysteinyl-[cysteine desulfurase] + A + AMP + diphosphate + H(+). It participates in tRNA modification. Catalyzes the ATP-dependent 2-thiolation of cytidine in position 32 of tRNA, to form 2-thiocytidine (s(2)C32). The sulfur atoms are provided by the cysteine/cysteine desulfurase (IscS) system. This is tRNA-cytidine(32) 2-sulfurtransferase from Pseudomonas putida (strain ATCC 47054 / DSM 6125 / CFBP 8728 / NCIMB 11950 / KT2440).